A 236-amino-acid polypeptide reads, in one-letter code: Ubiquinone biosynthesis O-methyltransferase (236 aa).

Residues R36, G56, D77, and M125 each contribute to the S-adenosyl-L-methionine site.

Belongs to the methyltransferase superfamily. UbiG/COQ3 family.

It catalyses the reaction a 3-demethylubiquinol + S-adenosyl-L-methionine = a ubiquinol + S-adenosyl-L-homocysteine + H(+). The catalysed reaction is a 3-(all-trans-polyprenyl)benzene-1,2-diol + S-adenosyl-L-methionine = a 2-methoxy-6-(all-trans-polyprenyl)phenol + S-adenosyl-L-homocysteine + H(+). The protein operates within cofactor biosynthesis; ubiquinone biosynthesis. In terms of biological role, O-methyltransferase that catalyzes the 2 O-methylation steps in the ubiquinone biosynthetic pathway. The sequence is that of Ubiquinone biosynthesis O-methyltransferase from Haemophilus ducreyi (strain 35000HP / ATCC 700724).